The sequence spans 192 residues: Phosphoheptose isomerase (192 aa).

One can recognise an SIS domain in the interval 37 to 192 (LADSFKQEGK…IQLVEKEMAK (156 aa)). 52–54 (NGG) contributes to the substrate binding site. His-61 and Glu-65 together coordinate Zn(2+). Residues Glu-65, 93 to 94 (ND), 119 to 121 (STS), Ser-124, and Gln-172 contribute to the substrate site. Zn(2+)-binding residues include Gln-172 and His-180.

The protein belongs to the SIS family. GmhA subfamily. In terms of assembly, homotetramer. Requires Zn(2+) as cofactor.

The protein localises to the cytoplasm. The enzyme catalyses 2 D-sedoheptulose 7-phosphate = D-glycero-alpha-D-manno-heptose 7-phosphate + D-glycero-beta-D-manno-heptose 7-phosphate. It participates in carbohydrate biosynthesis; D-glycero-D-manno-heptose 7-phosphate biosynthesis; D-glycero-alpha-D-manno-heptose 7-phosphate and D-glycero-beta-D-manno-heptose 7-phosphate from sedoheptulose 7-phosphate: step 1/1. Its function is as follows. Catalyzes the isomerization of sedoheptulose 7-phosphate in D-glycero-D-manno-heptose 7-phosphate. This Aeromonas hydrophila subsp. hydrophila (strain ATCC 7966 / DSM 30187 / BCRC 13018 / CCUG 14551 / JCM 1027 / KCTC 2358 / NCIMB 9240 / NCTC 8049) protein is Phosphoheptose isomerase.